The sequence spans 707 residues: SPX domain-containing membrane protein At4g11810 (707 aa).

Positions 2-145 (VAFGKKLKER…GYRFTNYYVK (144 aa)) constitute an SPX domain. 6 helical membrane passes run 252–272 (FMSL…TYII), 283–303 (LGAA…AQLF), 320–340 (LIFS…AYDF), 342–361 (SLAL…ARAV), 380–400 (AGFV…AGLL), and 416–436 (LPGW…AISF). Acidic residues predominate over residues 481-498 (EETEHDEEDDGDGSEESS). Positions 481-503 (EETEHDEEDDGDGSEESSDDSRK) are disordered. 5 helical membrane passes run 523 to 543 (LLIY…SSVV), 557 to 577 (IFLF…GSYI), 586 to 606 (ILLA…HVVI), 614 to 634 (VISG…NLSL), and 679 to 699 (MLLN…ILAT).

This sequence belongs to the major facilitator superfamily.

It is found in the membrane. In Arabidopsis thaliana (Mouse-ear cress), this protein is SPX domain-containing membrane protein At4g11810.